The sequence spans 533 residues: Light-independent protochlorophyllide reductase subunit B (533 aa).

Asp-36 provides a ligand contact to [4Fe-4S] cluster. Catalysis depends on Asp-292, which acts as the Proton donor. 428 to 429 (GL) is a substrate binding site.

It belongs to the ChlB/BchB/BchZ family. In terms of assembly, protochlorophyllide reductase is composed of three subunits; BchL, BchN and BchB. Forms a heterotetramer of two BchB and two BchN subunits. [4Fe-4S] cluster is required as a cofactor.

The enzyme catalyses chlorophyllide a + oxidized 2[4Fe-4S]-[ferredoxin] + 2 ADP + 2 phosphate = protochlorophyllide a + reduced 2[4Fe-4S]-[ferredoxin] + 2 ATP + 2 H2O. Its pathway is porphyrin-containing compound metabolism; bacteriochlorophyll biosynthesis (light-independent). In terms of biological role, component of the dark-operative protochlorophyllide reductase (DPOR) that uses Mg-ATP and reduced ferredoxin to reduce ring D of protochlorophyllide (Pchlide) to form chlorophyllide a (Chlide). This reaction is light-independent. The NB-protein (BchN-BchB) is the catalytic component of the complex. This Prosthecochloris aestuarii (strain DSM 271 / SK 413) protein is Light-independent protochlorophyllide reductase subunit B.